We begin with the raw amino-acid sequence, 490 residues long: MTSFSTSAQCSTSDSACRISPGQINQVRPKLPLLKILHAAGAQGEMFTVKEVMHYLGQYIMVKQLYDQQEQHMVYCGGDLLGELLGRQSFSVKDPSPLYDMLRKNLVTLATATTDAAQTLALAQDHSMDIPSQDQLKQSAEESSTSRKRTTEDDIPTLPTSEHKCIHSREDEDLIENLAQDETSRLDLGFEEWDVAGLPWWFLGNLRSNYTPRSNGSTDLQTNQDVGTAIVSDTTDDLWFLNESVSEQLGVGIKVEAADTEQTSEEVGKVSDKKVIEVGKNDDLEDSKSLSDDTDVEVTSEDEWQCTECKKFNSPSKRYCFRCWALRKDWYSDCSKLTHSLSTSDITAIPEKENEGNDVPDCRRTISAPVVRPKDAYIKKENSKLFDPCNSVEFLDLAHSSESQETISSMGEQLDNLSEQRTDTENMEDCQNLLKPCSLCEKRPRDGNIIHGRTGHLVTCFHCARRLKKAGASCPICKKEIQLVIKVFIA.

One can recognise an SWIB/MDM2 domain in the interval 25-108 (NQVRPKLPLL…YDMLRKNLVT (84 aa)). The interval 129–160 (DIPSQDQLKQSAEESSTSRKRTTEDDIPTLPT) is disordered. Residues 130–143 (IPSQDQLKQSAEES) are compositionally biased toward polar residues. Residues 246–332 (SEQLGVGIKV…CWALRKDWYS (87 aa)) are region II. The RanBP2-type zinc finger occupies 300–329 (SEDEWQCTECKKFNSPSKRYCFRCWALRKD). The residue at position 342 (Ser342) is a Phosphoserine; by CHEK2. Ser367 carries the post-translational modification Phosphoserine; by CHEK1 and CHEK2. Positions 393 to 490 (EFLDLAHSSE…IQLVIKVFIA (98 aa)) are necessary for interaction with USP2. The segment at 437-478 (CSLCEKRPRDGNIIHGRTGHLVTCFHCARRLKKAGASCPICK) adopts an RING-type zinc-finger fold. The short motif at 442-445 (KRPR) is the Nuclear localization signal element.

Belongs to the MDM2/MDM4 family. Interacts with MDM2. Interacts with TP53, TP73 and USP2. Found in a trimeric complex with USP2, MDM2 and MDM4. Interacts (phosphorylated) with YWHAG; negatively regulates MDM4 activity toward TP53. Phosphorylated. Phosphorylation at Ser-367 promotes interaction with YWHAG and subsequent ubiquitination and degradation. Phosphorylation at Ser-342 also induces ubiquitination and degradation but to a lower extent. In terms of processing, ubiquitinated and degraded by MDM2. Deubiquitination by USP2 on the other hand stabilizes the MDM4 protein. In terms of tissue distribution, expressed in all tissues tested with high levels in thymus.

It localises to the nucleus. Functionally, along with MDM2, contributes to TP53 regulation. Inhibits p53/TP53- and TP73/p73-mediated cell cycle arrest and apoptosis by binding its transcriptional activation domain. Inhibits degradation of MDM2. Can reverse MDM2-targeted degradation of TP53 while maintaining suppression of TP53 transactivation and apoptotic functions. The protein is Protein Mdm4 (MDM4) of Homo sapiens (Human).